Consider the following 462-residue polypeptide: Probable threonine/serine transporter YbxG (462 aa).

12 helical membrane-spanning segments follow: residues 17 to 37 (MIAL…STIS), 38 to 58 (WTGP…FFIM), 89 to 109 (ITAW…IIAV), 121 to 141 (PAWI…LISV), 154 to 174 (IKIV…FFGF), 190 to 210 (GGFF…VIAA), 238 to 258 (IIWR…TVYP), 276 to 296 (IGIT…AMSG), 331 to 351 (LYGT…NYIA), 355 to 375 (IFVY…FIIL), 398 to 418 (FAPF…VGMW), and 427 to 447 (LIVG…FGIG).

The protein belongs to the amino acid-polyamine-organocation (APC) superfamily.

The protein localises to the cell membrane. Functionally, probable threonine transporter. Is also active as a minor serine permease. The sequence is that of Probable threonine/serine transporter YbxG (ybxG) from Bacillus subtilis (strain 168).